The chain runs to 159 residues: Endoribonuclease YbeY (159 aa).

Zn(2+) is bound by residues H125, H129, and H135.

Belongs to the endoribonuclease YbeY family. Zn(2+) serves as cofactor.

The protein localises to the cytoplasm. In terms of biological role, single strand-specific metallo-endoribonuclease involved in late-stage 70S ribosome quality control and in maturation of the 3' terminus of the 16S rRNA. The sequence is that of Endoribonuclease YbeY from Lactiplantibacillus plantarum (strain ATCC BAA-793 / NCIMB 8826 / WCFS1) (Lactobacillus plantarum).